Reading from the N-terminus, the 236-residue chain is Hydroxyacylglutathione hydrolase (236 aa).

Zn(2+) contacts are provided by His52, His54, Asp56, His57, His108, Asp125, and His163.

It belongs to the metallo-beta-lactamase superfamily. Glyoxalase II family. Monomer. Zn(2+) serves as cofactor.

The enzyme catalyses an S-(2-hydroxyacyl)glutathione + H2O = a 2-hydroxy carboxylate + glutathione + H(+). It functions in the pathway secondary metabolite metabolism; methylglyoxal degradation; (R)-lactate from methylglyoxal: step 2/2. Its function is as follows. Thiolesterase that catalyzes the hydrolysis of S-D-lactoyl-glutathione to form glutathione and D-lactic acid. The polypeptide is Hydroxyacylglutathione hydrolase (Mannheimia succiniciproducens (strain KCTC 0769BP / MBEL55E)).